We begin with the raw amino-acid sequence, 215 residues long: Large ribosomal subunit protein uL16 (215 aa).

This sequence belongs to the universal ribosomal protein uL16 family. Component of the large ribosomal subunit.

It is found in the cytoplasm. Its function is as follows. Component of the large ribosomal subunit. Plays a role in the formation of actively translating ribosomes. Plays a role in the embryonic brain development. The chain is Large ribosomal subunit protein uL16 from Danio rerio (Zebrafish).